Consider the following 504-residue polypeptide: Maturase K (504 aa).

This sequence belongs to the intron maturase 2 family. MatK subfamily.

The protein localises to the plastid. Its subcellular location is the chloroplast. Its function is as follows. Usually encoded in the trnK tRNA gene intron. Probably assists in splicing its own and other chloroplast group II introns. The sequence is that of Maturase K from Vigna mungo (Black gram).